We begin with the raw amino-acid sequence, 70 residues long: Small ribosomal subunit protein bS21 (70 aa).

This sequence belongs to the bacterial ribosomal protein bS21 family.

This Paracidovorax citrulli (strain AAC00-1) (Acidovorax citrulli) protein is Small ribosomal subunit protein bS21.